Reading from the N-terminus, the 529-residue chain is Protein FLOURY ENDOSPERM 6, chloroplastic (529 aa).

Disordered regions lie at residues 1 to 22 (MLPL…PTLT), 39 to 77 (AAPH…NAAR), and 166 to 275 (QGAV…HNKS). The transit peptide at 1–71 (MLPLLLPLPV…QTRAPRRTLS (71 aa)) directs the protein to the chloroplast. The segment covering 9–18 (PVTPPPPLPS) has biased composition (pro residues). Over residues 41–57 (PHHHHHHRRRRVYRRQR) the composition is skewed to basic residues. Positions 400-452 (VMQAQEELRSIRAKIAVLEGKMALEIIEKNKIIEEKQRRLDEAEKALSELRTV) form a coiled coil.

In terms of assembly, interacts with SKIPA. Interacts with ISA1. As to expression, expressed in leaves, stems and panicles. Expressed at lower levels in roots and developing seeds.

The protein resides in the plastid. The protein localises to the chloroplast. Its function is as follows. Involved in compound starch granule formation and starch synthesis in endosperm. May act as a regulatory scaffolding protein and affect starch synthesis and compound starch granule formation through direct interaction with isoamylase 1 (ISA1). Binds starch, amylopectin and amylose through its C-terminal carbohydrate-binding domain (CBM) in vitro. The polypeptide is Protein FLOURY ENDOSPERM 6, chloroplastic (Oryza sativa subsp. japonica (Rice)).